Here is a 79-residue protein sequence, read N- to C-terminus: Pyridoxal 5'-phosphate synthase PDX1-like 4 (79 aa).

This sequence belongs to the PdxS/SNZ family.

The sequence is that of Pyridoxal 5'-phosphate synthase PDX1-like 4 (PDX1L4) from Arabidopsis thaliana (Mouse-ear cress).